Here is a 599-residue protein sequence, read N- to C-terminus: Elongation factor 4 (599 aa).

The tr-type G domain occupies 2-184; sequence KHIRNFSIIA…RLVRDIPPPQ (183 aa). Residues 14 to 19 and 131 to 134 contribute to the GTP site; these read DHGKST and NKID.

The protein belongs to the TRAFAC class translation factor GTPase superfamily. Classic translation factor GTPase family. LepA subfamily.

It is found in the cell inner membrane. The catalysed reaction is GTP + H2O = GDP + phosphate + H(+). In terms of biological role, required for accurate and efficient protein synthesis under certain stress conditions. May act as a fidelity factor of the translation reaction, by catalyzing a one-codon backward translocation of tRNAs on improperly translocated ribosomes. Back-translocation proceeds from a post-translocation (POST) complex to a pre-translocation (PRE) complex, thus giving elongation factor G a second chance to translocate the tRNAs correctly. Binds to ribosomes in a GTP-dependent manner. The chain is Elongation factor 4 from Yersinia enterocolitica serotype O:8 / biotype 1B (strain NCTC 13174 / 8081).